Reading from the N-terminus, the 30-residue chain is Cycloviolacin-O20 (30 aa).

The segment at residues 1 to 30 is a cross-link (cyclopeptide (Gly-Asp)); the sequence is GIPCGESCVWIPCLTSAIGCSCKSKVCYRD. Cystine bridges form between C4–C20, C8–C22, and C13–C27.

This is a cyclic peptide.

Its function is as follows. Probably participates in a plant defense mechanism. This is Cycloviolacin-O20 from Viola odorata (Sweet violet).